We begin with the raw amino-acid sequence, 282 residues long: Halorhodopsin (282 aa).

Topologically, residues 1-29 (MMETAADALASGTVPLEMTQTQIFEAIQG) are extracellular. Residues 30-55 (DTLLASSLWINIALAGLSILLFVYMG) traverse the membrane as a helical segment. Residues 56–61 (RNLEDP) are Cytoplasmic-facing. The chain crosses the membrane as a helical span at residues 62–85 (RAQLIFVATLMVPLVSISSYTGLV). Residues 86–109 (SGLTVSFLEMPAGHALAGQEVLTP) are Extracellular-facing. A helical membrane pass occupies residues 110-131 (WGRYLTWALSTPMILVALGLLA). At 132-134 (GSN) the chain is on the cytoplasmic side. The helical transmembrane segment at 135–158 (ATKLFTAVTADIGMCVTGLAAALT) threads the bilayer. Topologically, residues 159–161 (TSS) are extracellular. The helical transmembrane segment at 162–184 (YLLRWVWYVISCAFFVVVLYVLL) threads the bilayer. Residues 185–196 (AEWAEDAEVAGT) lie on the Cytoplasmic side of the membrane. A helical transmembrane segment spans residues 197–220 (AEIFNTLKLLTVVLWLGYPIFWAL). The Extracellular segment spans residues 221-229 (GAEGLAVLD). A helical transmembrane segment spans residues 230–258 (VAVTSWAYSGMDIVAKYLFAFLLLRWVVD). N6-(retinylidene)lysine is present on Lys-245. The Cytoplasmic segment spans residues 259-282 (NERTVAGMAAGLGAPLARCAPADD).

It belongs to the archaeal/bacterial/fungal opsin family.

It localises to the cell membrane. Light-driven chloride pump. This chain is Halorhodopsin (hop), found in Halorubrum sodomense.